Reading from the N-terminus, the 227-residue chain is DNA packaging ATPase P9 (227 aa).

Residue 16-23 (GKTGTGKT) coordinates ATP.

As to quaternary structure, heterodimer of P6 and P9; further multimerizes as hexamers of heterodimers. Part of the dodecameric portal complex that is composed of the packaging efficiency factor P6, the DNA packaging ATPase P9, and the internal heterododecamer P20/P22 which spans the virion inner membrane.

Its subcellular location is the virion. In terms of biological role, together with the packaging efficiency factor P6, forms the external part of the portal vertex that is embeded in the capsid and which plays critical roles in genome packaging and genome ejection. Both proteins multimerize as a single ring-shaped heterdodecamer arranged around a central channel. The sequence is that of DNA packaging ATPase P9 (IX) from Enterobacteria phage PRD1 (Bacteriophage PRD1).